Reading from the N-terminus, the 240-residue chain is Flagellar L-ring protein (240 aa).

An N-terminal signal peptide occupies residues 1 to 20; the sequence is MIRNFLLFFMPIYAILFLSG. Cysteine 21 carries N-palmitoyl cysteine lipidation. Cysteine 21 carries S-diacylglycerol cysteine lipidation.

It belongs to the FlgH family. In terms of assembly, the basal body constitutes a major portion of the flagellar organelle and consists of four rings (L,P,S, and M) mounted on a central rod.

Its subcellular location is the cell outer membrane. It localises to the bacterial flagellum basal body. Assembles around the rod to form the L-ring and probably protects the motor/basal body from shearing forces during rotation. In Sulfurimonas denitrificans (strain ATCC 33889 / DSM 1251) (Thiomicrospira denitrificans (strain ATCC 33889 / DSM 1251)), this protein is Flagellar L-ring protein.